Here is a 201-residue protein sequence, read N- to C-terminus: Peptide deformylase (201 aa).

Positions 121 and 163 each coordinate Fe cation. E164 is an active-site residue. Residue H167 participates in Fe cation binding.

Belongs to the polypeptide deformylase family. Fe(2+) serves as cofactor.

It carries out the reaction N-terminal N-formyl-L-methionyl-[peptide] + H2O = N-terminal L-methionyl-[peptide] + formate. Removes the formyl group from the N-terminal Met of newly synthesized proteins. Requires at least a dipeptide for an efficient rate of reaction. N-terminal L-methionine is a prerequisite for activity but the enzyme has broad specificity at other positions. In Synechococcus sp. (strain CC9902), this protein is Peptide deformylase.